Here is a 466-residue protein sequence, read N- to C-terminus: Argininosuccinate lyase (466 aa).

The protein belongs to the lyase 1 family. Argininosuccinate lyase subfamily.

The protein resides in the cytoplasm. It catalyses the reaction 2-(N(omega)-L-arginino)succinate = fumarate + L-arginine. Its pathway is amino-acid biosynthesis; L-arginine biosynthesis; L-arginine from L-ornithine and carbamoyl phosphate: step 3/3. This is Argininosuccinate lyase from Ehrlichia ruminantium (strain Gardel).